A 587-amino-acid chain; its full sequence is Calcium/calmodulin-dependent protein kinase kinase 2 (587 aa).

Residues 1-11 show a composition bias toward polar residues; it reads MSSCVSSQPTS. Disordered stretches follow at residues 1–32 and 74–115; these read MSSCVSSQPTSDRAAPQDELGSGGVSRESQKP and EADG…SSLD. An N-acetylserine modification is found at Ser-2. Phosphoserine occurs at positions 99, 113, 128, 132, and 136. Residues 101–115 are compositionally biased toward polar residues; sequence QERSQGGPASSSSLD. A Protein kinase domain is found at 164–445; sequence YTLKDEIGKG…VPEIKLHPWV (282 aa). Residues 170–178 and Lys-193 contribute to the ATP site; that span reads IGKGSYGVV. The segment at 203 to 225 is RP domain; it reads QAGFPRRPPPRGTRPAPGGCIQP. A disordered region spans residues 204 to 224; the sequence is AGFPRRPPPRGTRPAPGGCIQ. Catalysis depends on Asp-311, which acts as the Proton acceptor. An autoinhibitory domain region spans residues 471–476; the sequence is ENSVKH. The calmodulin-binding stretch occupies residues 474–499; that stretch reads VKHIPSLATVILVKTMIRKRSFGNPF. Phosphoserine occurs at positions 494 and 510. Residues 496-587 are disordered; it reads GNPFEGSRRE…QQPEEAMEPE (92 aa). Residues 520–535 are compositionally biased toward basic and acidic residues; it reads PTREWEPLSEPKEARQ. Pro residues predominate over residues 569–579; the sequence is PGSPPRTPPQQ. The residue at position 571 (Ser-571) is a Phosphoserine.

Belongs to the protein kinase superfamily. Ser/Thr protein kinase family. As to quaternary structure, interacts with calmodulin. Phosphorylated by PKA. Each isoform may show a different pattern of phosphorylation. Autophosphorylated. In terms of tissue distribution, mainly expressed in brain, but detected in all tissues tested (at protein level). In the brain, isoform 1 may be predominant. with high levels in the cerebellum and hippocampus, although isoform 3 is detectable. Isoform 3 is also expressed in lung.

The protein localises to the nucleus. Its subcellular location is the cytoplasm. The protein resides in the cell projection. It is found in the neuron projection. The catalysed reaction is L-seryl-[protein] + ATP = O-phospho-L-seryl-[protein] + ADP + H(+). It catalyses the reaction L-threonyl-[protein] + ATP = O-phospho-L-threonyl-[protein] + ADP + H(+). Its activity is regulated as follows. Activated by Ca(2+)/calmodulin. Binding of calmodulin may relieve intrasteric autoinhibition. Autophosphorylation does not alter activity or regulation by Ca(2+)/calmodulin. In part, activity is independent on Ca(2+)/calmodulin. In terms of biological role, calcium/calmodulin-dependent protein kinase belonging to a proposed calcium-triggered signaling cascade involved in a number of cellular processes. Phosphorylates CAMK1 and CAMK4. Phosphorylates CAMK1D. Seems to be involved in hippocampal activation of CREB1. Efficiently phosphorylates 5'-AMP-activated protein kinase (AMPK) trimer, including that consisting of PRKAA1, PRKAB1 and PRKAG1. This phosphorylation is stimulated in response to Ca(2+) signals. May play a role in neurite growth. Isoform 2 may promote neurite elongation, while isoform 1 may promoter neurite branching. The sequence is that of Calcium/calmodulin-dependent protein kinase kinase 2 (Camkk2) from Rattus norvegicus (Rat).